A 303-amino-acid polypeptide reads, in one-letter code: E3 ubiquitin-protein ligase CCNB1IP1 homolog (303 aa).

The RING-type; degenerate zinc-finger motif lies at 3 to 42 (CNACWRELEGQAVSTTCGHLLCTEDAKKILSNDAACPICD). Residues 119–184 (LEEVHTAYQK…YESAKRSAIQ (66 aa)) adopt a coiled-coil conformation. Residues 201-268 (VPNIMDSSDP…DIRPRQPARP (68 aa)) form a disordered region.

Interacts with ZIP4 and PTD. As to expression, expressed in young panicles.

The protein localises to the nucleus. Its subcellular location is the chromosome. The catalysed reaction is S-ubiquitinyl-[E2 ubiquitin-conjugating enzyme]-L-cysteine + [acceptor protein]-L-lysine = [E2 ubiquitin-conjugating enzyme]-L-cysteine + N(6)-ubiquitinyl-[acceptor protein]-L-lysine.. The protein operates within protein modification; protein ubiquitination. Functionally, ubiquitin E3 ligase required for class I crossover (CO) formation during meiosis. The polypeptide is E3 ubiquitin-protein ligase CCNB1IP1 homolog (Oryza sativa subsp. japonica (Rice)).